We begin with the raw amino-acid sequence, 122 residues long: Aspartate 1-decarboxylase (122 aa).

The active-site Schiff-base intermediate with substrate; via pyruvic acid is the Ser-25. Position 25 is a pyruvic acid (Ser) (Ser-25). Position 57 (Thr-57) interacts with substrate. Tyr-58 acts as the Proton donor in catalysis. 73-75 (GAA) lines the substrate pocket.

It belongs to the PanD family. As to quaternary structure, heterooctamer of four alpha and four beta subunits. Requires pyruvate as cofactor. In terms of processing, is synthesized initially as an inactive proenzyme, which is activated by self-cleavage at a specific serine bond to produce a beta-subunit with a hydroxyl group at its C-terminus and an alpha-subunit with a pyruvoyl group at its N-terminus.

Its subcellular location is the cytoplasm. The catalysed reaction is L-aspartate + H(+) = beta-alanine + CO2. It functions in the pathway cofactor biosynthesis; (R)-pantothenate biosynthesis; beta-alanine from L-aspartate: step 1/1. In terms of biological role, catalyzes the pyruvoyl-dependent decarboxylation of aspartate to produce beta-alanine. The sequence is that of Aspartate 1-decarboxylase from Bordetella parapertussis (strain 12822 / ATCC BAA-587 / NCTC 13253).